The primary structure comprises 129 residues: uncharacterized protein (129 aa).

The disordered stretch occupies residues 34–57 (SAPLRPPRELHAAPPPATPTQTVV).

This is an uncharacterized protein from Homo sapiens (Human).